A 336-amino-acid chain; its full sequence is Ornithine carbamoyltransferase, catabolic (336 aa).

Carbamoyl phosphate is bound by residues Ser-57–Thr-60, Gln-84, Arg-108, and His-135–Gln-138. L-ornithine is bound by residues Asn-168, Asp-232, and Ser-236–Met-237. Carbamoyl phosphate contacts are provided by residues Cys-274–Leu-275 and Arg-321.

The protein belongs to the aspartate/ornithine carbamoyltransferase superfamily. OTCase family.

The protein resides in the cytoplasm. The catalysed reaction is carbamoyl phosphate + L-ornithine = L-citrulline + phosphate + H(+). The protein operates within amino-acid degradation; L-arginine degradation via ADI pathway; carbamoyl phosphate from L-arginine: step 2/2. Functionally, reversibly catalyzes the transfer of the carbamoyl group from carbamoyl phosphate (CP) to the N(epsilon) atom of ornithine (ORN) to produce L-citrulline. The polypeptide is Ornithine carbamoyltransferase, catabolic (Burkholderia mallei (strain ATCC 23344)).